Here is a 364-residue protein sequence, read N- to C-terminus: Mannose-1-phosphate guanyltransferase (364 aa).

The protein belongs to the transferase hexapeptide repeat family.

The protein resides in the cytoplasm. The catalysed reaction is alpha-D-mannose 1-phosphate + GTP + H(+) = GDP-alpha-D-mannose + diphosphate. Its pathway is nucleotide-sugar biosynthesis; GDP-alpha-D-mannose biosynthesis; GDP-alpha-D-mannose from alpha-D-mannose 1-phosphate (GTP route): step 1/1. Functionally, involved in cell wall synthesis where it is required for glycosylation. Involved in cell cycle progression through cell-size checkpoint. This Neurospora crassa (strain ATCC 24698 / 74-OR23-1A / CBS 708.71 / DSM 1257 / FGSC 987) protein is Mannose-1-phosphate guanyltransferase (mpg-1).